The sequence spans 305 residues: Aspartate carbamoyltransferase catalytic subunit (305 aa).

2 residues coordinate carbamoyl phosphate: Arg54 and Thr55. Lys82 provides a ligand contact to L-aspartate. Residues Arg104, His132, and Gln135 each coordinate carbamoyl phosphate. L-aspartate contacts are provided by Arg165 and Arg218. Carbamoyl phosphate-binding residues include Gly259 and Pro260.

This sequence belongs to the aspartate/ornithine carbamoyltransferase superfamily. ATCase family. Heterododecamer (2C3:3R2) of six catalytic PyrB chains organized as two trimers (C3), and six regulatory PyrI chains organized as three dimers (R2).

It carries out the reaction carbamoyl phosphate + L-aspartate = N-carbamoyl-L-aspartate + phosphate + H(+). The protein operates within pyrimidine metabolism; UMP biosynthesis via de novo pathway; (S)-dihydroorotate from bicarbonate: step 2/3. Its function is as follows. Catalyzes the condensation of carbamoyl phosphate and aspartate to form carbamoyl aspartate and inorganic phosphate, the committed step in the de novo pyrimidine nucleotide biosynthesis pathway. The polypeptide is Aspartate carbamoyltransferase catalytic subunit (Caldicellulosiruptor bescii (strain ATCC BAA-1888 / DSM 6725 / KCTC 15123 / Z-1320) (Anaerocellum thermophilum)).